A 138-amino-acid polypeptide reads, in one-letter code: MSSSLYRVLRNAWEVGPRSYWKQLNSIGDTKSGRLVGTDIYGNKFYETDHQDEIHLRTRYVEYKEKDYDMSQVEPGWHFWLGYGVDTAPCNTPKEKLPIRAYPYKFQPNYTGTPGAFVTYNTLKPKISAWEPVTKQRS.

The protein belongs to the complex I NDUFA12 subunit family. As to quaternary structure, complex I is composed of 42 different subunits.

The protein localises to the mitochondrion inner membrane. Accessory subunit of the mitochondrial membrane respiratory chain NADH dehydrogenase (Complex I), that is believed not to be involved in catalysis. Complex I functions in the transfer of electrons from NADH to the respiratory chain. The immediate electron acceptor for the enzyme is believed to be ubiquinone. This Yarrowia lipolytica (strain CLIB 122 / E 150) (Yeast) protein is NADH dehydrogenase [ubiquinone] 1 alpha subcomplex subunit N7BM.